The following is a 107-amino-acid chain: Small ribosomal subunit protein bS16m (107 aa).

It belongs to the bacterial ribosomal protein bS16 family. As to quaternary structure, component of the mitochondrial small ribosomal subunit (mt-SSU). Mature N.crassa 74S mitochondrial ribosomes consist of a small (37S) and a large (54S) subunit. The 37S small subunit contains a 16S ribosomal RNA (16S mt-rRNA) and 32 different proteins. The 54S large subunit contains a 23S rRNA (23S mt-rRNA) and 42 different proteins.

The protein localises to the mitochondrion. Functionally, component of the mitochondrial ribosome (mitoribosome), a dedicated translation machinery responsible for the synthesis of mitochondrial genome-encoded proteins, including at least some of the essential transmembrane subunits of the mitochondrial respiratory chain. The mitoribosomes are attached to the mitochondrial inner membrane and translation products are cotranslationally integrated into the membrane. This is Small ribosomal subunit protein bS16m (cyt-21) from Neurospora crassa (strain ATCC 24698 / 74-OR23-1A / CBS 708.71 / DSM 1257 / FGSC 987).